A 92-amino-acid polypeptide reads, in one-letter code: Small ribosomal subunit protein uS19 (92 aa).

This sequence belongs to the universal ribosomal protein uS19 family.

Functionally, protein S19 forms a complex with S13 that binds strongly to the 16S ribosomal RNA. This chain is Small ribosomal subunit protein uS19, found in Cellvibrio japonicus (strain Ueda107) (Pseudomonas fluorescens subsp. cellulosa).